A 265-amino-acid chain; its full sequence is Homeobox protein engrailed-2-B (265 aa).

2 stretches are compositionally biased toward basic and acidic residues: residues 1 to 12 (MEENEQNNREVE) and 102 to 115 (GEKK…ETLK). 3 disordered regions span residues 1–38 (MEEN…QPHH), 60–138 (INHQ…SSKA), and 156–182 (DRPS…PRTA). The segment covering 122-136 (DHSLSSDSDSSQASS) has biased composition (low complexity). Residues 176 to 235 (DKRPRTAFTAEQLQRLKAEFQTNRYLTEQRRQSLAQELGLNESQIKIWFQNKRAKIKKST) constitute a DNA-binding region (homeobox).

It belongs to the engrailed homeobox family.

Its subcellular location is the nucleus. In Xenopus laevis (African clawed frog), this protein is Homeobox protein engrailed-2-B (en2-b).